A 393-amino-acid chain; its full sequence is Short-chain dehydrogenase/reductase family 42E member 1 (393 aa).

Tyr-152 acts as the Proton acceptor in catalysis. Position 156 (Lys-156) interacts with NAD(+). Helical transmembrane passes span 282–302 (LPLT…FILG) and 371–391 (GLLV…SVIL).

The protein belongs to the 3-beta-HSD family.

Its subcellular location is the membrane. This chain is Short-chain dehydrogenase/reductase family 42E member 1 (SDR42E1), found in Homo sapiens (Human).